Consider the following 90-residue polypeptide: Small ribosomal subunit protein uS15c (90 aa).

In terms of assembly, component of the chloroplast small ribosomal subunit (SSU). Mature 70S chloroplast ribosomes of higher plants consist of a small (30S) and a large (50S) subunit. The 30S small subunit contains 1 molecule of ribosomal RNA (16S rRNA) and 24 different proteins. The 50S large subunit contains 3 rRNA molecules (23S, 5S and 4.5S rRNA) and 33 different proteins.

It is found in the plastid. Its subcellular location is the chloroplast. In terms of biological role, component of the chloroplast ribosome (chloro-ribosome), a dedicated translation machinery responsible for the synthesis of chloroplast genome-encoded proteins, including proteins of the transcription and translation machinery and components of the photosynthetic apparatus. The chain is Small ribosomal subunit protein uS15c (rps15) from Spinacia oleracea (Spinach).